The following is a 463-amino-acid chain: Quinolone resistance protein NorB (463 aa).

14 consecutive transmembrane segments (helical) span residues 19–39 (IVLS…VVLI), 53–73 (IAVS…GGLA), 86–106 (IILN…LLLI), 107–127 (IGRL…LSII), 142–162 (YWSI…GAVA), 165–185 (LGWR…LFLI), 201–221 (FDIK…ILIT), 230–250 (SLLF…FIVL), 273–293 (TASN…NTFV), 299–319 (YSLL…LIMI), 334–354 (PMLI…LTFL), 357–377 (ILYV…LGIY), 403–423 (MASA…YAIV), and 435–455 (IALW…LLLV).

Belongs to the major facilitator superfamily. TCR/Tet family.

It is found in the cell membrane. Functionally, multidrug efflux pump that acts independently of NorA and is one of the factors that confers resistance against diverse quinolones and chemical compounds. The chain is Quinolone resistance protein NorB (norB) from Staphylococcus aureus (strain bovine RF122 / ET3-1).